The primary structure comprises 122 residues: Large ribosomal subunit protein uL14c (122 aa).

This sequence belongs to the universal ribosomal protein uL14 family. In terms of assembly, part of the 50S ribosomal subunit.

It localises to the plastid. The protein resides in the chloroplast. In terms of biological role, binds to 23S rRNA. The polypeptide is Large ribosomal subunit protein uL14c (Amborella trichopoda).